The primary structure comprises 488 residues: MIPVVALVGRPNVGKSTLFNRLTRTRDALVADYPGLTRDRKYGRAHLSGYEFIVVDTGGIDGTEEGIETHMAEQSMAAIEEADVVLFLTDARAGLTAADQAISEHLRRREKTTFVVANKVDGIDADSACAEFWALGLGEVYQMAAAQGRGVTNMIEYALAPYAEALGLNRDGDDEEEKEEREYTEEEAEAEQTRLQDLPIKLAVIGKPNVGKSTLTNRILGEERVVVYDAPGTTRDSIYIPMERDGREYVLIDTAGVRRRSKVNETVEKFSVIKTLKAVEDCNVVLLIVDAREGIAEQDLGLLGFALNAGRALVIAVNKWDGIDQDIKDRVKSELDRRLGFIDFARIHFISALHGTGVGHLFESVQEAYESATRRVSTSMLTRIMQMAQDDHQPPMVNGRRVKLKYAHAGGYNPPIVVVHGNQVKKLPDSYKRFMMNYYRRSLKVMGTPIQVRFQDGDNPFEGMNTKKLTVSQERRRKRMMTHIKDKK.

An EngA-type G 1 domain is found at 3–166 (PVVALVGRPN…YALAPYAEAL (164 aa)). GTP-binding positions include 9–16 (GRPNVGKS), 56–60 (DTGGI), and 118–121 (NKVD). The segment at 168–192 (LNRDGDDEEEKEEREYTEEEAEAEQ) is disordered. Residues 172 to 190 (GDDEEEKEEREYTEEEAEA) show a composition bias toward acidic residues. An EngA-type G 2 domain is found at 200-373 (IKLAVIGKPN…SVQEAYESAT (174 aa)). Residues 206–213 (GKPNVGKS), 253–257 (DTAGV), and 318–321 (NKWD) contribute to the GTP site. Residues 374-458 (RRVSTSMLTR…PIQVRFQDGD (85 aa)) enclose the KH-like domain.

Belongs to the TRAFAC class TrmE-Era-EngA-EngB-Septin-like GTPase superfamily. EngA (Der) GTPase family. As to quaternary structure, associates with the 50S ribosomal subunit.

Its function is as follows. GTPase that plays an essential role in the late steps of ribosome biogenesis. The protein is GTPase Der of Shewanella woodyi (strain ATCC 51908 / MS32).